Consider the following 319-residue polypeptide: MLSLQTLAKKAVAKQSVPEEYHYILKYCGLWWQNKPISLCHYCNYVILSSTPFKGELLHLDVALIMAIKENNYDVIRLFTEWGANIYYGLTCARTEQTQELCRQLGAKDSLNNKEIFTGLMRHKTSNNIILCHEIFDKNPMLETLNVQEMGEEIHRELKLFIFYILDNVPMNVLIKYWYAIAVKYKLKRAISFFYQTYGHLSMWRLMCAIYFNNVFDLHEIYEQKIVHMDIDKMMKLACMQDYNFLTIYYCFVLGGDIDKAITVTQWHHQTNNLYFCKDLKDLKQNILTARPLLLPNITDPKKIYTMLKNYLPTSSNSL.

The protein belongs to the asfivirus MGF 360 family.

Functionally, plays a role in virus cell tropism, and may be required for efficient virus replication in macrophages. This African swine fever virus (isolate Warthog/Namibia/Wart80/1980) (ASFV) protein is Protein MGF 360-8L.